Here is a 404-residue protein sequence, read N- to C-terminus: Serine/threonine-protein kinase UCN (404 aa).

Residues 22–340 (LKVLKLLGKG…AAEIKEHAFF (319 aa)) form the Protein kinase domain. ATP-binding positions include 28-36 (LGKGATGTV) and lysine 55. The active-site Proton acceptor is aspartate 153. A disordered region spans residues 185–207 (EFYHLSDPEPDPNPESNLSHNKK). The AGC-kinase C-terminal domain maps to 341 to 404 (KGVRWELLTE…CSENNPFVDF (64 aa)).

It belongs to the protein kinase superfamily. AGC Ser/Thr protein kinase family. As to expression, expressed in the epidermis and cortex of the transition zone of the root apex and developing flowers. Expressed in rosette leaves, stems and siliques.

It localises to the cytoplasm. Its subcellular location is the nucleus. The catalysed reaction is L-seryl-[protein] + ATP = O-phospho-L-seryl-[protein] + ADP + H(+). It catalyses the reaction L-threonyl-[protein] + ATP = O-phospho-L-threonyl-[protein] + ADP + H(+). Functionally, regulates planar ovule integument development by suppressing aberrantly oriented growth. Maintains planar growth of integuments by repressing the developmental regulator and transcription factor KAN4 which is involved in the control of early integument growth and polarity. Restricts growth in stamen filaments, petals, and cotyledons. The polypeptide is Serine/threonine-protein kinase UCN (Arabidopsis thaliana (Mouse-ear cress)).